Reading from the N-terminus, the 239-residue chain is MVKYNRIVLKISGEALAGEAGFGIKPPVIATIAKQIKEVHELGVQIAIVCGGGNIWRGETGAEMGMERAQADYMGMLATVMNALALQDNLESQGVPTRVQTSIEMRQIAEPYIRRKAIRHLEKGRVVIFAGGTGNPYFSTDTTAALRAAEIGADVILMAKNNVDGVYSADPNKDTHAVKYESLTHMDIINKDLKVMDSTASTLSMDNDIDLVVFNLNEPGNIKRVVEGQKIGTTIEGRS.

Position 10-13 (10-13) interacts with ATP; it reads KISG. The interval 18–23 is involved in allosteric activation by GTP; it reads GEAGFG. Residue Gly52 coordinates UMP. Residues Gly53 and Arg57 each contribute to the ATP site. Residues Asp72 and 133 to 140 contribute to the UMP site; that span reads TGNPYFST. ATP contacts are provided by Asn161, Tyr167, and Asp170.

Belongs to the UMP kinase family. Homohexamer.

It is found in the cytoplasm. The enzyme catalyses UMP + ATP = UDP + ADP. It participates in pyrimidine metabolism; CTP biosynthesis via de novo pathway; UDP from UMP (UMPK route): step 1/1. Allosterically activated by GTP. Inhibited by UTP. Its function is as follows. Catalyzes the reversible phosphorylation of UMP to UDP. The chain is Uridylate kinase from Lacticaseibacillus paracasei (strain ATCC 334 / BCRC 17002 / CCUG 31169 / CIP 107868 / KCTC 3260 / NRRL B-441) (Lactobacillus paracasei).